A 626-amino-acid chain; its full sequence is Phosphoenolpyruvate carboxykinase (ATP) 2 (626 aa).

Disordered regions lie at residues 1–23 (MASP…APVN) and 64–86 (PNLV…KHQQ). Position 324–331 (324–331 (GLSGTGKT)) interacts with ATP.

Belongs to the phosphoenolpyruvate carboxykinase (ATP) family. Homohexamer.

It localises to the cytoplasm. The enzyme catalyses oxaloacetate + ATP = phosphoenolpyruvate + ADP + CO2. It participates in carbohydrate biosynthesis; gluconeogenesis. This is Phosphoenolpyruvate carboxykinase (ATP) 2 (PCK2) from Urochloa panicoides (Panic liverseed grass).